Here is a 331-residue protein sequence, read N- to C-terminus: Rho GTPase-activating protein 5 (331 aa).

A CRIB domain is found at 3–16; it reads IGGPTNIRHVAHVT. The Rho-GAP domain maps to 48–225; sequence VSTESMQLSY…LLKSLTEKTV (178 aa). A compositionally biased stretch (basic and acidic residues) spans 227–251; sequence EREASSSVVDRRCSKEAEDGEKEKD. Residues 227–331 form a disordered region; sequence EREASSSVVD…VQPPICSSNP (105 aa). The span at 252-277 shows a compositional bias: acidic residues; that stretch reads NEEEEEDEEEEEEEEDEDEDEEEEGD.

In terms of tissue distribution, expressed in differentiating xylem cells.

It localises to the cell membrane. Its function is as follows. Acts as a GTPase activator for the Rac-type GTPase by converting it to an inactive GDP-bound state. The chain is Rho GTPase-activating protein 5 (ROPGAP5) from Arabidopsis thaliana (Mouse-ear cress).